Here is a 292-residue protein sequence, read N- to C-terminus: Ribosomal RNA small subunit methyltransferase H (292 aa).

S-adenosyl-L-methionine-binding positions include 32-34, D51, L87, D101, and Q108; that span reads GGH.

It belongs to the methyltransferase superfamily. RsmH family.

The protein localises to the cytoplasm. It catalyses the reaction cytidine(1402) in 16S rRNA + S-adenosyl-L-methionine = N(4)-methylcytidine(1402) in 16S rRNA + S-adenosyl-L-homocysteine + H(+). Its function is as follows. Specifically methylates the N4 position of cytidine in position 1402 (C1402) of 16S rRNA. The polypeptide is Ribosomal RNA small subunit methyltransferase H (Pseudothermotoga lettingae (strain ATCC BAA-301 / DSM 14385 / NBRC 107922 / TMO) (Thermotoga lettingae)).